We begin with the raw amino-acid sequence, 365 residues long: Testis-specific serine/threonine-protein kinase 1 (365 aa).

Residues Tyr12 to Val272 enclose the Protein kinase domain. Residues Leu18 to Val26 and Lys41 each bind ATP. Asp136 functions as the Proton acceptor in the catalytic mechanism. Thr174 is subject to Phosphothreonine. Positions Gly282 to Thr365 are disordered. The segment covering Gly303–Glu330 has biased composition (basic and acidic residues). The segment covering Asp331 to Glu347 has biased composition (polar residues).

This sequence belongs to the protein kinase superfamily. CAMK Ser/Thr protein kinase family. In terms of assembly, interacts with TSSK2. Interacts with HSP90; this interaction stabilizes TSSK1. Requires Mg(2+) as cofactor. Autophosphorylated. Post-translationally, ubiquitinated; HSP90 activity negatively regulates ubiquitination and degradation. As to expression, testis-specific. Expressed only in postmeiotic spermatids at the final stages of cytodifferentiation in the seminiferous tubules (at protein level). Not detected in released sperms in the lumen of the seminiferous tubules and the epididymis.

It is found in the cytoplasm. Its subcellular location is the cytoplasmic vesicle. The protein localises to the secretory vesicle. It localises to the acrosome. The protein resides in the cell projection. It is found in the cilium. Its subcellular location is the flagellum. It catalyses the reaction L-seryl-[protein] + ATP = O-phospho-L-seryl-[protein] + ADP + H(+). The catalysed reaction is L-threonyl-[protein] + ATP = O-phospho-L-threonyl-[protein] + ADP + H(+). Activated by phosphorylation on Thr-174, potentially by autophosphorylation. In terms of biological role, testis-specific serine/threonine-protein kinase required during spermatid development. Phosphorylates 'Ser-281' of TSKS. Involved in the late stages of spermatogenesis, during the reconstruction of the cytoplasm. During spermatogenesis, required for the transformation of a ring-shaped structure around the base of the flagellum originating from the chromatoid body. This is Testis-specific serine/threonine-protein kinase 1 (Tssk1b) from Mus musculus (Mouse).